Consider the following 370-residue polypeptide: Protein FAM110B (370 aa).

2 disordered regions span residues 127–151 (SSEGSSSGSGHKHSSRNWPPHRSEA) and 237–256 (KSPEADPVEPACGVSRRPSL). Residues serine 238 and serine 301 each carry the phosphoserine modification. A disordered region spans residues 317-337 (DCEQSQDSNSDLRNDDSANDR). Basic and acidic residues predominate over residues 326-335 (SDLRNDDSAN).

The protein belongs to the FAM110 family.

The protein localises to the cytoplasm. Its subcellular location is the cytoskeleton. The protein resides in the microtubule organizing center. It localises to the centrosome. This Pongo abelii (Sumatran orangutan) protein is Protein FAM110B (FAM110B).